Reading from the N-terminus, the 395-residue chain is GTPase Obg (395 aa).

Positions 1–159 constitute an Obg domain; the sequence is MQFVDEASII…RNLRFEMKVM (159 aa). Residues 128-147 form a disordered region; the sequence is IHFKSSTNRAPRKTTPGTEG. Positions 160–333 constitute an OBG-type G domain; the sequence is ADVGLLGVPN…LVQAAHRWLT (174 aa). GTP is bound by residues 166 to 173, 191 to 195, 213 to 216, 283 to 286, and 314 to 316; these read GVPNAGKS, FTTLV, DVPG, NKLD, and SAI. Mg(2+)-binding residues include Ser173 and Thr193. Residues 340–368 are compositionally biased toward basic and acidic residues; it reads AEDETAFEHEREMRRRMEDEAVARAEARM. The segment at 340-395 is disordered; sequence AEDETAFEHEREMRRRMEDEAVARAEARMSRKRKPAEDDDDDFDEDDYDVEVEYAP. The segment covering 376 to 395 has biased composition (acidic residues); sequence EDDDDDFDEDDYDVEVEYAP.

The protein belongs to the TRAFAC class OBG-HflX-like GTPase superfamily. OBG GTPase family. Monomer. The cofactor is Mg(2+).

The protein localises to the cytoplasm. Its function is as follows. An essential GTPase which binds GTP, GDP and possibly (p)ppGpp with moderate affinity, with high nucleotide exchange rates and a fairly low GTP hydrolysis rate. Plays a role in control of the cell cycle, stress response, ribosome biogenesis and in those bacteria that undergo differentiation, in morphogenesis control. The sequence is that of GTPase Obg from Chromohalobacter salexigens (strain ATCC BAA-138 / DSM 3043 / CIP 106854 / NCIMB 13768 / 1H11).